A 453-amino-acid chain; its full sequence is uncharacterized protein (453 aa).

Disordered regions lie at residues 140–161 (YGESKRKRSKRSSKPLPGTRPQ) and 311–332 (TTTRQPNFDKTKTPATMPSASS).

This is an uncharacterized protein from Caenorhabditis elegans.